The following is a 142-amino-acid chain: Large ribosomal subunit protein uL23 (142 aa).

This sequence belongs to the universal ribosomal protein uL23 family.

The polypeptide is Large ribosomal subunit protein uL23 (RPL25) (Kluyveromyces lactis (strain ATCC 8585 / CBS 2359 / DSM 70799 / NBRC 1267 / NRRL Y-1140 / WM37) (Yeast)).